The following is a 536-amino-acid chain: Testis-specific protein 10-interacting protein (536 aa).

Disordered stretches follow at residues 1-94, 185-234, and 246-305; these read MLNT…LFSS, SQGL…PGQG, and MEEE…FKGP. Over residues 48–64 the composition is skewed to low complexity; the sequence is SGDSLQSQSCQQQRSYS. A compositionally biased stretch (basic residues) spans 71-83; that stretch reads KERKPRRRNKKGR. Positions 375–451 form a coiled coil; sequence QAWEQQQLKE…LQGIQHRVQA (77 aa). The interval 491-536 is disordered; the sequence is GNAEGIPRKHRSYRSFGVEMESSPQSPPKTEPTSSQPGRHPSPTLD.

This chain is Testis-specific protein 10-interacting protein (Tsga10ip), found in Rattus norvegicus (Rat).